The primary structure comprises 197 residues: UPF0637 protein LEUM_0496 (197 aa).

It belongs to the UPF0637 family.

In Leuconostoc mesenteroides subsp. mesenteroides (strain ATCC 8293 / DSM 20343 / BCRC 11652 / CCM 1803 / JCM 6124 / NCDO 523 / NBRC 100496 / NCIMB 8023 / NCTC 12954 / NRRL B-1118 / 37Y), this protein is UPF0637 protein LEUM_0496.